The sequence spans 163 residues: MKQKAIYPGTFDPFTNGHLDVLERALNIFEEVIVVIAENCQKHALFTIEEREAMTREVTCDYPGVTVEVLHRGLLADYARQVGARAIVRGVRQVKDFEYEFQMSLLNRQLYPEVTTVFLMPNVKYTYVASSIIKEVAMLGGDVSKFVHPCVLEMMHQKREEQN.

Threonine 10 contributes to the substrate binding site. Residues 10–11 (TF) and histidine 18 each bind ATP. Positions 42, 75, and 89 each coordinate substrate. ATP-binding positions include 90-92 (GVR), glutamate 100, and 125-131 (YTYVASS).

This sequence belongs to the bacterial CoaD family. In terms of assembly, homohexamer. Requires Mg(2+) as cofactor.

Its subcellular location is the cytoplasm. The catalysed reaction is (R)-4'-phosphopantetheine + ATP + H(+) = 3'-dephospho-CoA + diphosphate. It participates in cofactor biosynthesis; coenzyme A biosynthesis; CoA from (R)-pantothenate: step 4/5. Functionally, reversibly transfers an adenylyl group from ATP to 4'-phosphopantetheine, yielding dephospho-CoA (dPCoA) and pyrophosphate. This is Phosphopantetheine adenylyltransferase from Pelodictyon phaeoclathratiforme (strain DSM 5477 / BU-1).